The sequence spans 258 residues: Aspartate/glutamate leucyltransferase (258 aa).

The protein belongs to the R-transferase family. Bpt subfamily.

The protein resides in the cytoplasm. The catalysed reaction is N-terminal L-glutamyl-[protein] + L-leucyl-tRNA(Leu) = N-terminal L-leucyl-L-glutamyl-[protein] + tRNA(Leu) + H(+). The enzyme catalyses N-terminal L-aspartyl-[protein] + L-leucyl-tRNA(Leu) = N-terminal L-leucyl-L-aspartyl-[protein] + tRNA(Leu) + H(+). In terms of biological role, functions in the N-end rule pathway of protein degradation where it conjugates Leu from its aminoacyl-tRNA to the N-termini of proteins containing an N-terminal aspartate or glutamate. This is Aspartate/glutamate leucyltransferase from Rhizobium johnstonii (strain DSM 114642 / LMG 32736 / 3841) (Rhizobium leguminosarum bv. viciae).